The chain runs to 204 residues: MSKESQLEALVAACHWIGAKGWAPATGGNMSLREDARWCWLSESGKDKGSLTTDDFLQVDIATNLAPSGRKPSAETGLHTLIYRLFPEANCVLHVHTVNATVLSRVEKSDALHLSGYEMQKSLAGQITHLDDVPVAIFDNDQDIDALAERIARHHRQFPLRYGFLLRGHGLTCWGSDVAVARRHLEGLEFLFECEMQRRLLERA.

Zn(2+) contacts are provided by H94 and H96.

Belongs to the aldolase class II family. MtnB subfamily. Zn(2+) is required as a cofactor.

The catalysed reaction is 5-(methylsulfanyl)-D-ribulose 1-phosphate = 5-methylsulfanyl-2,3-dioxopentyl phosphate + H2O. It functions in the pathway amino-acid biosynthesis; L-methionine biosynthesis via salvage pathway; L-methionine from S-methyl-5-thio-alpha-D-ribose 1-phosphate: step 2/6. Its function is as follows. Catalyzes the dehydration of methylthioribulose-1-phosphate (MTRu-1-P) into 2,3-diketo-5-methylthiopentyl-1-phosphate (DK-MTP-1-P). In Cronobacter sakazakii (strain ATCC BAA-894) (Enterobacter sakazakii), this protein is Methylthioribulose-1-phosphate dehydratase.